The primary structure comprises 754 residues: ATP-dependent RNA helicase DRS1 (754 aa).

Disordered stretches follow at residues 1–61 and 119–227; these read MVVG…NLDE and GLVK…GDEA. A compositionally biased stretch (acidic residues) spans 19-34; that stretch reads DSEDDVPILDSSDDEK. A compositionally biased stretch (basic residues) spans 40-51; sequence TTKKRKGKNNKK. Positions 124 to 142 are enriched in basic and acidic residues; sequence AHIDSKQEEETEKEKVEKE. Composition is skewed to acidic residues over residues 167–193 and 202–211; these read NQSE…QEEM and DEIDEEDDSE. The residue at position 210 (Ser210) is a Phosphoserine. The Q motif motif lies at 233–261; that stretch reads ENFNSLSLSRPVLKGLASLGYVKPSPIQS. The Helicase ATP-binding domain maps to 264 to 439; the sequence is IPIALLGKDI…SLSLKKPVRI (176 aa). Position 277-284 (277-284) interacts with ATP; it reads AVTGSGKT. Residues 387 to 390 carry the DEAD box motif; the sequence is DEAD. The region spanning 450–641 is the Helicase C-terminal domain; the sequence is KLTQEFVRIR…SMNDTIEDIL (192 aa). Residues 623–669 adopt a coiled-coil conformation; that stretch reads IEETNKLVESMNDTIEDILVEEKEEKEILRAEMQLRKGENMLKHKKE. Residues 675-754 form a disordered region; it reads RRTWFQSESD…NKKKGFKSRR (80 aa). Basic residues predominate over residues 696–707; sequence RNKKVTNSKKRK. Residues 724–736 show a composition bias toward basic and acidic residues; the sequence is TKTDRIADQERTF. Over residues 737–754 the composition is skewed to basic residues; that stretch reads KKQKSTNSNKKKGFKSRR.

The protein belongs to the DEAD box helicase family. DDX27/DRS1 subfamily. In terms of assembly, interacts with RRP1 and associates with pre-ribosomal particles.

The protein localises to the nucleus. It is found in the nucleolus. It catalyses the reaction ATP + H2O = ADP + phosphate + H(+). Functionally, ATP-binding RNA helicase involved in ribosome assembly. The chain is ATP-dependent RNA helicase DRS1 (DRS1) from Saccharomyces cerevisiae (strain YJM789) (Baker's yeast).